We begin with the raw amino-acid sequence, 216 residues long: Adenylate kinase (216 aa).

10-15 (GAGKGT) serves as a coordination point for ATP. The segment at 30-59 (STGDILRENVKKGTALGLKAKSYMDKGELV) is NMP. AMP contacts are provided by residues Thr31, Arg36, 57-59 (ELV), 85-88 (GFPR), and Gln92. The LID stretch occupies residues 126-163 (GRRICRSCGASYHLVFNPPKAKDLCDSCGGELYQRDDD). Arg127 is an ATP binding site. Zn(2+) is bound by residues Cys130 and Cys133. Residue 136–137 (SY) participates in ATP binding. The Zn(2+) site is built by Cys150 and Cys153. 2 residues coordinate AMP: Arg160 and Arg171. Lys199 contributes to the ATP binding site.

Belongs to the adenylate kinase family. As to quaternary structure, monomer.

The protein localises to the cytoplasm. It catalyses the reaction AMP + ATP = 2 ADP. Its pathway is purine metabolism; AMP biosynthesis via salvage pathway; AMP from ADP: step 1/1. Catalyzes the reversible transfer of the terminal phosphate group between ATP and AMP. Plays an important role in cellular energy homeostasis and in adenine nucleotide metabolism. The protein is Adenylate kinase of Methanocella arvoryzae (strain DSM 22066 / NBRC 105507 / MRE50).